The chain runs to 230 residues: Orotidine 5'-phosphate decarboxylase (230 aa).

Substrate is bound by residues Asp10, Lys31, 58 to 67 (DLKLHDIPNT), Thr117, Arg179, Gln188, Gly208, and Arg209. The active-site Proton donor is Lys60.

It belongs to the OMP decarboxylase family. Type 1 subfamily. As to quaternary structure, homodimer.

The enzyme catalyses orotidine 5'-phosphate + H(+) = UMP + CO2. Its pathway is pyrimidine metabolism; UMP biosynthesis via de novo pathway; UMP from orotate: step 2/2. Functionally, catalyzes the decarboxylation of orotidine 5'-monophosphate (OMP) to uridine 5'-monophosphate (UMP). The sequence is that of Orotidine 5'-phosphate decarboxylase from Staphylococcus aureus (strain bovine RF122 / ET3-1).